A 984-amino-acid chain; its full sequence is Mediator of RNA polymerase II transcription subunit 5 (984 aa).

This sequence belongs to the Mediator complex subunit 5 family. As to quaternary structure, component of the Mediator complex.

It localises to the nucleus. Functionally, component of the Mediator complex, a coactivator involved in the regulated transcription of nearly all RNA polymerase II-dependent genes. Mediator functions as a bridge to convey information from gene-specific regulatory proteins to the basal RNA polymerase II transcription machinery. Mediator is recruited to promoters by direct interactions with regulatory proteins and serves as a scaffold for the assembly of a functional preinitiation complex with RNA polymerase II and the general transcription factors. In Phaeosphaeria nodorum (strain SN15 / ATCC MYA-4574 / FGSC 10173) (Glume blotch fungus), this protein is Mediator of RNA polymerase II transcription subunit 5 (NUT1).